Consider the following 648-residue polypeptide: Threonine--tRNA ligase (648 aa).

Residues 1–61 form the TGS domain; sequence MINITFPDGA…TEDGSIEIVT (61 aa). The segment at 242–540 is catalytic; sequence DHRKLGKELD…LIENYKGAFP (299 aa). Residues cysteine 336, histidine 387, and histidine 517 each contribute to the Zn(2+) site.

Belongs to the class-II aminoacyl-tRNA synthetase family. Homodimer. Zn(2+) serves as cofactor.

The protein resides in the cytoplasm. It catalyses the reaction tRNA(Thr) + L-threonine + ATP = L-threonyl-tRNA(Thr) + AMP + diphosphate + H(+). Functionally, catalyzes the attachment of threonine to tRNA(Thr) in a two-step reaction: L-threonine is first activated by ATP to form Thr-AMP and then transferred to the acceptor end of tRNA(Thr). Also edits incorrectly charged L-seryl-tRNA(Thr). In Streptococcus thermophilus (strain ATCC BAA-250 / LMG 18311), this protein is Threonine--tRNA ligase.